We begin with the raw amino-acid sequence, 416 residues long: Serine hydroxymethyltransferase (416 aa).

Residues L121 and 125–127 (GHL) each bind (6S)-5,6,7,8-tetrahydrofolate. K229 bears the N6-(pyridoxal phosphate)lysine mark. (6S)-5,6,7,8-tetrahydrofolate is bound by residues E245 and 354-356 (SPF).

Belongs to the SHMT family. In terms of assembly, homodimer. It depends on pyridoxal 5'-phosphate as a cofactor.

It is found in the cytoplasm. The enzyme catalyses (6R)-5,10-methylene-5,6,7,8-tetrahydrofolate + glycine + H2O = (6S)-5,6,7,8-tetrahydrofolate + L-serine. It participates in one-carbon metabolism; tetrahydrofolate interconversion. Its pathway is amino-acid biosynthesis; glycine biosynthesis; glycine from L-serine: step 1/1. Its function is as follows. Catalyzes the reversible interconversion of serine and glycine with tetrahydrofolate (THF) serving as the one-carbon carrier. This reaction serves as the major source of one-carbon groups required for the biosynthesis of purines, thymidylate, methionine, and other important biomolecules. Also exhibits THF-independent aldolase activity toward beta-hydroxyamino acids, producing glycine and aldehydes, via a retro-aldol mechanism. In Aliivibrio salmonicida (strain LFI1238) (Vibrio salmonicida (strain LFI1238)), this protein is Serine hydroxymethyltransferase.